A 430-amino-acid chain; its full sequence is Glutamate-1-semialdehyde 2,1-aminomutase (430 aa).

Position 269 is an N6-(pyridoxal phosphate)lysine (Lys269).

This sequence belongs to the class-III pyridoxal-phosphate-dependent aminotransferase family. HemL subfamily. Homodimer. It depends on pyridoxal 5'-phosphate as a cofactor.

Its subcellular location is the cytoplasm. It catalyses the reaction (S)-4-amino-5-oxopentanoate = 5-aminolevulinate. It participates in porphyrin-containing compound metabolism; protoporphyrin-IX biosynthesis; 5-aminolevulinate from L-glutamyl-tRNA(Glu): step 2/2. The protein is Glutamate-1-semialdehyde 2,1-aminomutase of Desulfitobacterium hafniense (strain Y51).